Consider the following 750-residue polypeptide: DDT domain-containing protein DDR4 (750 aa).

Residues 1–125 (MGSSSDIVPD…ITSLVPPPEP (125 aa)) form a disordered region. The span at 45–54 (RAQQRLQELQ) shows a compositional bias: low complexity. Residues 55-77 (AAERKLKPPKKEYKREQHRRREE) are compositionally biased toward basic and acidic residues. Positions 78–100 (VVEEDEDSEDDDQEDEENDGDDE) are enriched in acidic residues. A DDT domain is found at 133-192 (LRSMWELASVLNFLHVFRPLLKINAEFSAEEFETALLTPNDTLSDIHIPLLKAIPPVTRM). 2 disordered regions span residues 450–505 (NGRS…TDFV) and 532–750 (LKKR…TDNS). A compositionally biased stretch (polar residues) spans 451–471 (GRSTSSTHPTEPVNDTASGRS). Residues 545–585 (EGDEEKGDEEYKWDEDNAEYEEEEEEEEEEDSLSASEEDSD) are compositionally biased toward acidic residues. Over residues 595–606 (RRETKLRSRSND) the composition is skewed to basic and acidic residues. The span at 688-707 (NADTTNGKENNQLNKSNGTT) shows a compositional bias: polar residues. Basic and acidic residues predominate over residues 741–750 (LKDDDKTDNS).

As to quaternary structure, interacts (via the DDT domain) with CHR11 (via C-terminus).

Its subcellular location is the nucleus. Functionally, probable transcription regulator. The chain is DDT domain-containing protein DDR4 from Arabidopsis thaliana (Mouse-ear cress).